Here is a 232-residue protein sequence, read N- to C-terminus: Ubiquinone biosynthesis O-methyltransferase (232 aa).

Residues arginine 36, glycine 55, aspartate 76, and leucine 120 each contribute to the S-adenosyl-L-methionine site.

It belongs to the methyltransferase superfamily. UbiG/COQ3 family.

It carries out the reaction a 3-demethylubiquinol + S-adenosyl-L-methionine = a ubiquinol + S-adenosyl-L-homocysteine + H(+). It catalyses the reaction a 3-(all-trans-polyprenyl)benzene-1,2-diol + S-adenosyl-L-methionine = a 2-methoxy-6-(all-trans-polyprenyl)phenol + S-adenosyl-L-homocysteine + H(+). The protein operates within cofactor biosynthesis; ubiquinone biosynthesis. In terms of biological role, O-methyltransferase that catalyzes the 2 O-methylation steps in the ubiquinone biosynthetic pathway. This Pseudomonas aeruginosa (strain ATCC 15692 / DSM 22644 / CIP 104116 / JCM 14847 / LMG 12228 / 1C / PRS 101 / PAO1) protein is Ubiquinone biosynthesis O-methyltransferase.